A 478-amino-acid chain; its full sequence is Trigger factor (478 aa).

Over residues 154 to 167 (MAKDSRSFEPREEG) the composition is skewed to basic and acidic residues. Disordered regions lie at residues 154-173 (MAKD…AQSG) and 444-478 (LFAE…KAAG). Residues 173 to 258 (GDRVTIDFVG…VKAVAAPGET (86 aa)) form the PPIase FKBP-type domain.

The protein belongs to the FKBP-type PPIase family. Tig subfamily.

The protein localises to the cytoplasm. It carries out the reaction [protein]-peptidylproline (omega=180) = [protein]-peptidylproline (omega=0). Functionally, involved in protein export. Acts as a chaperone by maintaining the newly synthesized protein in an open conformation. Functions as a peptidyl-prolyl cis-trans isomerase. This is Trigger factor from Methylorubrum populi (strain ATCC BAA-705 / NCIMB 13946 / BJ001) (Methylobacterium populi).